Consider the following 358-residue polypeptide: SPbeta prophage-derived probable integrase/recombinase YopP (358 aa).

The Core-binding (CB) domain occupies 23–114 (NKDIRSSSGN…SLKMLYTYLE (92 aa)). The region spanning 137-319 (KNWDKTTQTE…NIANSAGVTM (183 aa)) is the Tyr recombinase domain. Active-site residues include Arg178, Lys206, His268, and His295. Residue Tyr304 is the O-(3'-phospho-DNA)-tyrosine intermediate of the active site.

This sequence belongs to the 'phage' integrase family.

In terms of biological role, probable recombinase that does not seem to have a role in chromosome dimer resolution per se but rather may have some facilitative role during chromosome partitioning in general. In Bacillus subtilis (strain 168), this protein is SPbeta prophage-derived probable integrase/recombinase YopP (yopP).